The chain runs to 999 residues: Testis anion transporter 1 (999 aa).

The Cytoplasmic segment spans residues 1-93 (MQTERSLQSF…YRFKDWLLGD (93 aa)). A helical membrane pass occupies residues 94 to 114 (LLAGLSVGLVQVPQGLILSLL). Residues 115–117 (TRQ) are Extracellular-facing. The chain crosses the membrane as a helical span at residues 118-138 (LIPPLNVTYAAFCSSVIYVIF). A topological domain (cytoplasmic) is located at residue Gly139. Residues 140–160 (SCHQMSIGPFFLVSALMINVL) traverse the membrane as a helical segment. The Extracellular segment spans residues 161 to 200 (KDRPFNNGHLILGTFVKDDFSVPTFYLSYNRSLSMVASTT). An N-linked (GlcNAc...) asparagine glycan is attached at Asn190. The helical transmembrane segment at 201–221 (FLTGIIQLSMGMLGMGFMATY) threads the bilayer. Residues 222–230 (LPEAATSAY) lie on the Cytoplasmic side of the membrane. A helical membrane pass occupies residues 231-251 (LAAVALHIILAQMTCILGIMV). Topologically, residues 252–268 (SFHAGPISFIYNIINYC) are extracellular. Residues 269–289 (IALPKANSTSILLFITSVVAL) traverse the membrane as a helical segment. The Cytoplasmic portion of the chain corresponds to 290 to 305 (RINKCIRITFNRYPIE). Residues 306–326 (FPMELLLILGFSLLTSKITMA) form a helical membrane-spanning segment. At 327–354 (TENSKMLMNMIPYSFVFPENPEFGILSR) the chain is on the extracellular side. Residues 355–375 (VVLQALSLSFVSSFLLISLGK) traverse the membrane as a helical segment. The Cytoplasmic portion of the chain corresponds to 376–390 (KIANFHNYRTNSNQD). The chain crosses the membrane as a helical span at residues 391–411 (LIAIGLCNLLSSFFKCCVFTG). Residues 412 to 427 (SLSRTTIQDKSGGRQQ) are Extracellular-facing. A helical transmembrane segment spans residues 428–448 (FASLVGAGVMLLLMVKMESFF). The Cytoplasmic portion of the chain corresponds to 449–453 (HNLPN). A helical transmembrane segment spans residues 454–474 (AVLAGIILSNVVPYLEAIYNL). The Extracellular portion of the chain corresponds to 475–494 (PSLWRQDQYECIIWMVTFSS). The helical transmembrane segment at 495–515 (AILLGLDVGLLISLAFTFFVI) threads the bilayer. The Cytoplasmic segment spans residues 516-544 (TIRSHRTKILVLGQIPNTNIYRNVNDYRE). The STAS domain maps to 541 to 796 (DYREVILIPG…LSLHDAVLFA (256 aa)). Residues 545-565 (VILIPGVKIFQCCSSITFVNV) form a helical membrane-spanning segment. The Extracellular segment spans residues 566–999 (YHLKQKVLKE…RKPHNYPNSP (434 aa)). Residues 661-999 (TVSSTSQRNI…RKPHNYPNSP (339 aa)) are interaction with RACGAP1. Disordered regions lie at residues 678–701 (EKAW…SESL) and 893–999 (SELD…PNSP). Residues 684 to 696 (NSPPRNSPLPPPE) show a composition bias toward pro residues. Composition is skewed to acidic residues over residues 893-903 (SELDPGSELDS) and 912-947 (ELES…EPEP). Polar residues predominate over residues 973-982 (GSSNSQSRAP).

This sequence belongs to the SLC26A/SulP transporter (TC 2.A.53) family. As to quaternary structure, interacts with RACGAP1. Interacts with CFTR; stimulates anion transport activity of CFTR. Post-translationally, N-glycosylated. Expressed in testis and epididymis. Located at the end of the midpiece of the flagella, known as the annulus, in spermatozoa.

The protein resides in the membrane. The catalysed reaction is sulfate(out) + chloride(in) = sulfate(in) + chloride(out). It catalyses the reaction oxalate(in) + chloride(out) = oxalate(out) + chloride(in). In terms of biological role, antiporter that mediates the exchange of sulfate and oxalate against chloride ions across a membrane. Stimulates anion transport activity of CFTR. May cooperate with CFTR in the regulation of chloride and bicarbonate ions fluxes required for activation of the ADCY10/PKA pathway during sperm motility and sperm capacitation. May play a role in sperm tail differentiation and motility and hence male fertility. The sequence is that of Testis anion transporter 1 from Mus musculus (Mouse).